Reading from the N-terminus, the 334-residue chain is Spermidine synthase 1 (334 aa).

The segment covering 1-16 (MDAKETSATDLKRPRE) has biased composition (basic and acidic residues). The tract at residues 1 to 35 (MDAKETSATDLKRPREEDDNGGAATMETENGDQKK) is disordered. One can recognise a PABS domain in the interval 45 to 282 (PGWFSEMSPM…GVIGFMLCST (238 aa)). S-adenosyl 3-(methylsulfanyl)propylamine is bound at residue glutamine 76. Position 106 (tyrosine 106) interacts with putrescine. Residues glutamine 107, aspartate 131, glutamate 151, 182 to 183 (DG), and aspartate 201 contribute to the S-adenosyl 3-(methylsulfanyl)propylamine site. The Proton acceptor role is filled by aspartate 201. Residues 201-204 (DSSD) and tyrosine 270 contribute to the putrescine site.

The protein belongs to the spermidine/spermine synthase family. Homotetramer and heterodimer. Component of a multiprotein complex. Interacts with SPMS and SPDSYN2.

It carries out the reaction S-adenosyl 3-(methylsulfanyl)propylamine + putrescine = S-methyl-5'-thioadenosine + spermidine + H(+). The protein operates within amine and polyamine biosynthesis; spermidine biosynthesis; spermidine from putrescine: step 1/1. This is Spermidine synthase 1 (SPDSYN1) from Arabidopsis thaliana (Mouse-ear cress).